The sequence spans 558 residues: Xylulose kinase 2 (558 aa).

Substrate-binding positions include Asp16, 20–23 (QSMK), Ser111, and Asp283. Residues Thr305 and 456–460 (GASAN) each bind ATP.

This sequence belongs to the FGGY kinase family. A divalent metal cation is required as a cofactor.

It localises to the cytoplasm. The enzyme catalyses D-xylulose + ATP = D-xylulose 5-phosphate + ADP + H(+). It functions in the pathway isoprenoid biosynthesis; carotenoid biosynthesis. Repressed by oxo-clomazone (keto-clomazone), a bleaching herbicide. Functionally, mediates 1-deoxy-D-xylulose (DX) phosphorylation in the cytoplasm prior to the translocation of 1-deoxy-D-xylulose 5-phosphate into plastids. Can also phosphorylate D-xylulose (Xyl). Uses preferentially ATP as cosubstrate. The polypeptide is Xylulose kinase 2 (Arabidopsis thaliana (Mouse-ear cress)).